The chain runs to 240 residues: tRNA (guanine-N(1)-)-methyltransferase (240 aa).

S-adenosyl-L-methionine contacts are provided by residues G110 and 129–134 (LGDFVL).

The protein belongs to the RNA methyltransferase TrmD family. As to quaternary structure, homodimer.

It is found in the cytoplasm. It catalyses the reaction guanosine(37) in tRNA + S-adenosyl-L-methionine = N(1)-methylguanosine(37) in tRNA + S-adenosyl-L-homocysteine + H(+). In terms of biological role, specifically methylates guanosine-37 in various tRNAs. This Clostridium botulinum (strain ATCC 19397 / Type A) protein is tRNA (guanine-N(1)-)-methyltransferase.